The sequence spans 254 residues: 5-oxoprolinase subunit A 1 (254 aa).

The protein belongs to the LamB/PxpA family. Forms a complex composed of PxpA, PxpB and PxpC.

The enzyme catalyses 5-oxo-L-proline + ATP + 2 H2O = L-glutamate + ADP + phosphate + H(+). Catalyzes the cleavage of 5-oxoproline to form L-glutamate coupled to the hydrolysis of ATP to ADP and inorganic phosphate. This Burkholderia pseudomallei (strain K96243) protein is 5-oxoprolinase subunit A 1.